Consider the following 351-residue polypeptide: Biotin synthase (351 aa).

The region spanning 44-262 is the Radical SAM core domain; the sequence is NRVQVSTLLS…LAVARIMMPK (219 aa). [4Fe-4S] cluster is bound by residues cysteine 59, cysteine 63, and cysteine 66. Positions 103, 134, 194, and 266 each coordinate [2Fe-2S] cluster.

This sequence belongs to the radical SAM superfamily. Biotin synthase family. In terms of assembly, homodimer. It depends on [4Fe-4S] cluster as a cofactor. [2Fe-2S] cluster serves as cofactor.

The catalysed reaction is (4R,5S)-dethiobiotin + (sulfur carrier)-SH + 2 reduced [2Fe-2S]-[ferredoxin] + 2 S-adenosyl-L-methionine = (sulfur carrier)-H + biotin + 2 5'-deoxyadenosine + 2 L-methionine + 2 oxidized [2Fe-2S]-[ferredoxin]. It participates in cofactor biosynthesis; biotin biosynthesis; biotin from 7,8-diaminononanoate: step 2/2. Catalyzes the conversion of dethiobiotin (DTB) to biotin by the insertion of a sulfur atom into dethiobiotin via a radical-based mechanism. This is Biotin synthase from Stutzerimonas stutzeri (strain A1501) (Pseudomonas stutzeri).